The sequence spans 1088 residues: Probable cellulose synthase A catalytic subunit 9 [UDP-forming] (1088 aa).

Residue Met-1 is modified to N-acetylmethionine. Topologically, residues 1-283 are cytoplasmic; it reads MNTGGRLIAG…RSSRINPYRM (283 aa). 8 residues coordinate Zn(2+): Cys-39, Cys-42, Cys-58, Cys-61, Cys-66, Cys-69, Cys-81, and Cys-84. The RING-type; degenerate zinc finger occupies 39-85; the sequence is CKICRDEIELTDNGEPFIACNECAFPTCRPCYEYERREGNQACPQCG. A helical membrane pass occupies residues 284-304; the sequence is LIFCRLAILGLFFHYRILHPV. Topologically, residues 305–306 are extracellular; that stretch reads ND. The chain crosses the membrane as a helical span at residues 307-327; that stretch reads AFGLWLTSVICEIWFAVSWIL. Residues 328-871 lie on the Cytoplasmic side of the membrane; sequence DQFPKWYPIE…INSVVYPWTS (544 aa). Residues Ser-366, Lys-372, Glu-373, Asp-402, and Lys-543 each coordinate UDP-alpha-D-glucose. The active site involves Asp-402. Mn(2+)-binding residues include Lys-544 and Asp-568. The active site involves Asp-788. Residues 872 to 892 form a helical membrane-spanning segment; sequence LPLLVYCSLPAICLLTGKFIV. At 893-897 the chain is on the extracellular side; the sequence is PEISN. A helical membrane pass occupies residues 898–918; sequence YAGILFLLMFMSIAVTGILEM. The Cytoplasmic segment spans residues 919-933; the sequence is QWGKIGIDDWWRNEQ. The chain crosses the membrane as a helical span at residues 934–954; that stretch reads FWVIGGVSSHLFALFQGLLKV. Residues 955–983 are Extracellular-facing; sequence LAGVSTNFTVTSKAADDGEFSELYIFKWT. The N-linked (GlcNAc...) asparagine glycan is linked to Asn-961. A helical transmembrane segment spans residues 984-1004; the sequence is SLLIPPTTLLIINIVGVIVGV. Residues 1005 to 1015 lie on the Cytoplasmic side of the membrane; the sequence is SDAINNGYDSW. A helical transmembrane segment spans residues 1016–1036; the sequence is GPLFGRLFFALWVIVHLYPFL. Residues 1037 to 1045 are Extracellular-facing; sequence KGLLGKQDR. Residues 1046–1066 form a helical membrane-spanning segment; it reads VPTIILVWSILLASILTLLWV. Topologically, residues 1067–1088 are cytoplasmic; that stretch reads RVNPFVSKDGPVLEICGLDCLK.

This sequence belongs to the glycosyltransferase 2 family. Plant cellulose synthase subfamily. Requires Mn(2+) as cofactor. It depends on Zn(2+) as a cofactor. Expressed in young plants, stems and flowers.

It is found in the cell membrane. The enzyme catalyses [(1-&gt;4)-beta-D-glucosyl](n) + UDP-alpha-D-glucose = [(1-&gt;4)-beta-D-glucosyl](n+1) + UDP + H(+). Its pathway is glycan metabolism; plant cellulose biosynthesis. Probable catalytic subunit of cellulose synthase terminal complexes ('rosettes'), required for beta-1,4-glucan microfibril crystallization, a major mechanism of the cell wall formation. The polypeptide is Probable cellulose synthase A catalytic subunit 9 [UDP-forming] (Arabidopsis thaliana (Mouse-ear cress)).